Reading from the N-terminus, the 983-residue chain is Protein CLASP-3 (983 aa).

Disordered regions lie at residues 356 to 393 and 666 to 690; these read YPNR…TQKA and SNNI…QKES. The span at 359–372 shows a compositional bias: low complexity; the sequence is RPGSRTRTSSITST. The HEAT repeat unit spans residues 918–956; that stretch reads ITPTIIKAYQSTSSTVRKTVVYCLVAMVNRVGEQRMTPH.

This sequence belongs to the CLASP family.

It is found in the cytoplasm. Its subcellular location is the cytoskeleton. In terms of biological role, microtubule plus-end tracking protein that promotes the stabilization of dynamic microtubules. This Caenorhabditis elegans protein is Protein CLASP-3 (cls-3).